Here is a 551-residue protein sequence, read N- to C-terminus: Putative transport protein HI_0035 (551 aa).

Transmembrane regions (helical) follow at residues 4–24, 28–48, 65–85, 95–115, and 157–177; these read IAIT…IGHW, GVGL…HFTN, FGLI…FFSS, AFAI…HKIA, and VSYA…MWLI. RCK C-terminal domains lie at 191-275 and 277-360; these read RFNA…IIGH and VDAP…VIGN. Helical transmembrane passes span 370–390, 402–424, 438–458, 463–483, 492–512, and 529–549; these read MLPV…PFYI, AGGP…LYWF, IVLF…DTLV, LEWM…VGTI, YLTI…LAFA, and VYPL…VLLW.

This sequence belongs to the AAE transporter (TC 2.A.81) family. YidE subfamily.

It localises to the cell membrane. The chain is Putative transport protein HI_0035 from Haemophilus influenzae (strain ATCC 51907 / DSM 11121 / KW20 / Rd).